Reading from the N-terminus, the 545-residue chain is MTTNYIFVTGGVVSSLGKGIAAASLAAILEARGLNVTIMKLDPYINVDPGTMSPIQHGEVFVTEDGAETDLDLGHYERFIRTKMSRRNNFTTGRIYSDVLRKERRGDYLGATVQVIPHITNAIKERVLEGGEGHDVVLVEIGGTVGDIESLPFLEAIRQMAVEIGREHTLFMHLTLVPYMAASGEVKTKPTQHSVKELLSIGIQPDILICRSDRAVPANERAKIALFCNVPEKAVISLKDVDSIYKIPGLLKSQGLDDYICKRFSLDCPEANLSEWEQVIFEEANPVSEVTIGMVGKYIELPDAYKSVIEALKHGGLKNRVSVNIKLIDSQDVETRGVEILKGLDAILVPGGFGYRGVEGMITTARFARENNIPYLGICLGMQVALIDYARHVANMENANSTEFVPDCKYPVVALITEWRDENGNVEVRSEKSDLGGTMRLGAQQCQLVDDSLVRQLYDAPTIVERHRHRYEVNNMLLKQIEDAGLRVAGRSGDDQLVEIIEVPNHPWFVACQFHPEFTSTPRDGHPLFAGFVKAASEFQKRQAK.

The amidoligase domain stretch occupies residues 1-266; the sequence is MTTNYIFVTG…DDYICKRFSL (266 aa). A CTP-binding site is contributed by S14. Residue S14 coordinates UTP. ATP contacts are provided by residues 15–20 and D72; that span reads SLGKGI. Residues D72 and E140 each coordinate Mg(2+). Residues 147-149, 187-192, and K223 contribute to the CTP site; these read DIE and KTKPTQ. UTP is bound by residues 187 to 192 and K223; that span reads KTKPTQ. 239–241 is a binding site for ATP; the sequence is KDV. A Glutamine amidotransferase type-1 domain is found at 291-542; that stretch reads TIGMVGKYIE…VKAASEFQKR (252 aa). G352 provides a ligand contact to L-glutamine. Residue C379 is the Nucleophile; for glutamine hydrolysis of the active site. L-glutamine contacts are provided by residues 380–383, E403, and R470; that span reads LGMQ. Residues H515 and E517 contribute to the active site.

It belongs to the CTP synthase family. In terms of assembly, homotetramer.

The catalysed reaction is UTP + L-glutamine + ATP + H2O = CTP + L-glutamate + ADP + phosphate + 2 H(+). The enzyme catalyses L-glutamine + H2O = L-glutamate + NH4(+). It carries out the reaction UTP + NH4(+) + ATP = CTP + ADP + phosphate + 2 H(+). The protein operates within pyrimidine metabolism; CTP biosynthesis via de novo pathway; CTP from UDP: step 2/2. With respect to regulation, allosterically activated by GTP, when glutamine is the substrate; GTP has no effect on the reaction when ammonia is the substrate. The allosteric effector GTP functions by stabilizing the protein conformation that binds the tetrahedral intermediate(s) formed during glutamine hydrolysis. Inhibited by the product CTP, via allosteric rather than competitive inhibition. Catalyzes the ATP-dependent amination of UTP to CTP with either L-glutamine or ammonia as the source of nitrogen. Regulates intracellular CTP levels through interactions with the four ribonucleotide triphosphates. The polypeptide is CTP synthase (Escherichia coli O127:H6 (strain E2348/69 / EPEC)).